A 489-amino-acid chain; its full sequence is Poly(A) RNA polymerase GLD2 (489 aa).

The interval 93-118 (RQRFSCPSPHNQSARNSNFTSQPVTR) is disordered. Over residues 100-116 (SPHNQSARNSNFTSQPV) the composition is skewed to polar residues. Mg(2+) is bound by residues D219 and D221. Residues 386–440 (SLGDLFLGFLRYYATVFKWDKQVISVRMARTLPKSNCKEWKDKFICVEEPFNRTN) enclose the PAP-associated domain.

Belongs to the DNA polymerase type-B-like family. GLD2 subfamily. Mg(2+) serves as cofactor. The cofactor is Mn(2+).

It localises to the cytoplasm. The enzyme catalyses RNA(n) + ATP = RNA(n)-3'-adenine ribonucleotide + diphosphate. Its function is as follows. Cytoplasmic poly(A) RNA polymerase that adds successive AMP monomers to the 3'-end of specific RNAs, forming a poly(A) tail. In contrast to the canonical nuclear poly(A) RNA polymerase, it only adds poly(A) to selected cytoplasmic mRNAs. May not play a role in replication-dependent histone mRNA degradation. The protein is Poly(A) RNA polymerase GLD2 of Danio rerio (Zebrafish).